A 331-amino-acid polypeptide reads, in one-letter code: Sucrose operon repressor (331 aa).

In terms of domain architecture, HTH lacI-type spans 1–56 (MASLKDVARLAGVSMMTVSRVMHNAESVRPATRDRVLQAIQTLNYVPDLSARKMRA). Positions 4 to 23 (LKDVARLAGVSMMTVSRVMH) form a DNA-binding region, H-T-H motif.

Its function is as follows. Repressor for the csc operon. Binds D-fructose as an inducer. The sequence is that of Sucrose operon repressor (cscR) from Escherichia coli.